We begin with the raw amino-acid sequence, 89 residues long: Large ribosomal subunit protein bL31B (89 aa).

It belongs to the bacterial ribosomal protein bL31 family. Type B subfamily. In terms of assembly, part of the 50S ribosomal subunit.

The chain is Large ribosomal subunit protein bL31B from Aeromonas salmonicida (strain A449).